The chain runs to 434 residues: Glutamate-1-semialdehyde 2,1-aminomutase (434 aa).

Lys-270 is subject to N6-(pyridoxal phosphate)lysine.

The protein belongs to the class-III pyridoxal-phosphate-dependent aminotransferase family. HemL subfamily. Homodimer. The cofactor is pyridoxal 5'-phosphate.

Its subcellular location is the cytoplasm. It catalyses the reaction (S)-4-amino-5-oxopentanoate = 5-aminolevulinate. It participates in porphyrin-containing compound metabolism; protoporphyrin-IX biosynthesis; 5-aminolevulinate from L-glutamyl-tRNA(Glu): step 2/2. This is Glutamate-1-semialdehyde 2,1-aminomutase from Pelotomaculum thermopropionicum (strain DSM 13744 / JCM 10971 / SI).